The sequence spans 447 residues: Monocarboxylate transporter 11 (447 aa).

At 1 to 11 the chain is on the cytoplasmic side; it reads MTPKPAGPPDG. 12 helical membrane-spanning segments follow: residues 12–32, 54–74, 80–100, 107–127, 139–159, 162–182, 219–239, 249–269, 288–308, 330–350, 354–374, and 383–403; these read GWGW…YGLL, AWVS…GSAL, ARPV…FSAF, LYLG…APAL, VLAV…LAPA, FLLD…VTLH, AFSV…VPYV, GMGG…DACA, LVVF…VPTV, GSYA…GGVV, GLVM…SGFL, and ASFL…MGLP. Residues 404-447 are Cytoplasmic-facing; sequence RALPSCRPASPPATPPPERGELLPVPQVSLLSAGGTGSIRDTTC.

This sequence belongs to the major facilitator superfamily. Monocarboxylate porter (TC 2.A.1.13) family. As to quaternary structure, interacts with isoform 2 of BSG.

It localises to the endoplasmic reticulum membrane. The protein localises to the cell membrane. It carries out the reaction pyruvate(out) + H(+)(out) = pyruvate(in) + H(+)(in). Functionally, proton-linked monocarboxylate transporter. It catalyzes the transport of pyruvate across the plasma membrane. Probably involved in hepatic lipid metabolism: overexpression results in an increase of triacylglycerol(TAG) levels, small increases in intracellular diacylglycerols and decreases in lysophosphatidylcholine, cholesterol ester and sphingomyelin lipids. The polypeptide is Monocarboxylate transporter 11 (Slc16a11) (Mus musculus (Mouse)).